A 101-amino-acid polypeptide reads, in one-letter code: U-scoloptoxin(10)-Sm2a (101 aa).

A signal peptide spans 1 to 23 (MNKSMIILCAVLFLTYIIEENEA).

It belongs to the scoloptoxin-10 family. In terms of processing, contains 3 disulfide bonds. Expressed by the venom gland.

It is found in the secreted. This Scolopendra morsitans (Tanzanian blue ringleg centipede) protein is U-scoloptoxin(10)-Sm2a.